A 71-amino-acid chain; its full sequence is UPF0346 protein SSU05_1322 (71 aa).

The protein belongs to the UPF0346 family.

The chain is UPF0346 protein SSU05_1322 from Streptococcus suis (strain 05ZYH33).